The primary structure comprises 411 residues: Calmodulin-binding receptor-like cytoplasmic kinase 2 (411 aa).

Disordered regions lie at residues 1 to 44 (MPSR…DTTT) and 66 to 99 (SNYI…YGNA). Low complexity-rich tracts occupy residues 16 to 44 (TTSS…DTTT) and 66 to 95 (SNYI…VQRS). Thr-108 carries the post-translational modification Phosphothreonine. Residues 119 to 398 (FSPSFRIGQG…MKKCSEILWG (280 aa)) form the Protein kinase domain. ATP is bound by residues 125-133 (IGQGGFGTV) and Lys-147. Positions 134–159 (YKVKLRDGKTFAVKRAKKSMHDDRQG) are caM-binding. The active-site Proton acceptor is Asp-247. Residues Ser-251 and Ser-283 each carry the phosphoserine modification. 2 positions are modified to phosphothreonine: Thr-284 and Thr-289. The residue at position 297 (Tyr-297) is a Phosphotyrosine.

It belongs to the protein kinase superfamily. Ser/Thr protein kinase family. As to quaternary structure, interacts with calmodulin (CaM) in a Ca(2+)-dependent manner.

It is found in the cytoplasm. It catalyses the reaction L-seryl-[protein] + ATP = O-phospho-L-seryl-[protein] + ADP + H(+). The enzyme catalyses L-threonyl-[protein] + ATP = O-phospho-L-threonyl-[protein] + ADP + H(+). This Arabidopsis thaliana (Mouse-ear cress) protein is Calmodulin-binding receptor-like cytoplasmic kinase 2 (CRCK2).